A 274-amino-acid chain; its full sequence is Diaminopimelate epimerase (274 aa).

Substrate contacts are provided by Asn-11, Gln-44, and Asn-64. Cys-73 (proton donor) is an active-site residue. Substrate is bound by residues 74–75, Asn-157, Asn-190, and 208–209; these read GN and ER. The active-site Proton acceptor is the Cys-217. 218 to 219 serves as a coordination point for substrate; it reads GS.

The protein belongs to the diaminopimelate epimerase family. In terms of assembly, homodimer.

It localises to the cytoplasm. It catalyses the reaction (2S,6S)-2,6-diaminopimelate = meso-2,6-diaminopimelate. The protein operates within amino-acid biosynthesis; L-lysine biosynthesis via DAP pathway; DL-2,6-diaminopimelate from LL-2,6-diaminopimelate: step 1/1. Functionally, catalyzes the stereoinversion of LL-2,6-diaminopimelate (L,L-DAP) to meso-diaminopimelate (meso-DAP), a precursor of L-lysine and an essential component of the bacterial peptidoglycan. The protein is Diaminopimelate epimerase of Escherichia coli O6:H1 (strain CFT073 / ATCC 700928 / UPEC).